Here is a 217-residue protein sequence, read N- to C-terminus: Ras-related protein RABA1f (217 aa).

20–27 (GDSGVGKS) is a binding site for GTP. An Effector region motif is present at residues 42-50 (SKSTIGVEF). GTP contacts are provided by residues 68 to 72 (DTAGQ), 126 to 129 (NKAD), and 156 to 157 (SA). 2 S-geranylgeranyl cysteine lipidation sites follow: cysteine 214 and cysteine 215.

The protein belongs to the small GTPase superfamily. Rab family.

The protein resides in the cell membrane. Its function is as follows. Intracellular vesicle trafficking and protein transport. This Arabidopsis thaliana (Mouse-ear cress) protein is Ras-related protein RABA1f (RABA1F).